Here is a 308-residue protein sequence, read N- to C-terminus: MSESRQELLAWINQVTSLGLTRIEDCGKGYAMIQIFDSIYQDIPLKKVNFECNNEYQYINNWKVLQQVFLKKGIDKVVDPERLSRCKMQDNLEFVQWAKRFWDQYYPGGDYDALARRGNRGPANTRVMNSSAGATGPSRRRQVSSGSSTPSMTKSSANNNNVSSTANTAAVLRAKQAQQQITSLETQLYEVNETMFGLERERDFYFNKLREIEILVQTHLTTSPMSMENMLERIQAILYSTEDGFELPPDQPADLTTALTDHDTNNVAEEAQMTDLKDSETQRVPSAPDFVHARLQSLEVDDDENITF.

Residues 2-103 (SESRQELLAW…FVQWAKRFWD (102 aa)) enclose the Calponin-homology (CH) domain. Positions 117-162 (RGNRGPANTRVMNSSAGATGPSRRRQVSSGSSTPSMTKSSANNNNV) are disordered. Residues 144–162 (SSGSSTPSMTKSSANNNNV) show a composition bias toward low complexity. Residues 173-247 (RAKQAQQQIT…LYSTEDGFEL (75 aa)) form the EB1 C-terminal domain.

The protein belongs to the MAPRE family. In terms of assembly, interacts with tea2.

The protein localises to the cytoplasm. Its subcellular location is the cytoskeleton. Its function is as follows. May play a role in regulating the integrity of microtubules possibly by influencing their stability. Involved in an anchoring mechanism to maintain tea2 and tip1 at growing microtubule ends. Strongly stimulates the ATPase activity of tea2. The chain is Microtubule integrity protein mal3 (mal3) from Schizosaccharomyces pombe (strain 972 / ATCC 24843) (Fission yeast).